Here is a 306-residue protein sequence, read N- to C-terminus: Ribosomal RNA small subunit methyltransferase H (306 aa).

Residues 33 to 35 (GGY), D51, F78, D96, and Q103 contribute to the S-adenosyl-L-methionine site.

It belongs to the methyltransferase superfamily. RsmH family.

Its subcellular location is the cytoplasm. It carries out the reaction cytidine(1402) in 16S rRNA + S-adenosyl-L-methionine = N(4)-methylcytidine(1402) in 16S rRNA + S-adenosyl-L-homocysteine + H(+). Specifically methylates the N4 position of cytidine in position 1402 (C1402) of 16S rRNA. The sequence is that of Ribosomal RNA small subunit methyltransferase H from Rickettsia typhi (strain ATCC VR-144 / Wilmington).